The chain runs to 88 residues: UPF0223 protein YktA (88 aa).

Belongs to the UPF0223 family.

This chain is UPF0223 protein YktA (yktA), found in Bacillus subtilis (strain 168).